The primary structure comprises 55 residues: uncharacterized protein (55 aa).

Transmembrane regions (helical) follow at residues 5 to 25 (LISI…MMHM) and 26 to 46 (LPLY…LYRL).

The protein localises to the cell membrane. This is an uncharacterized protein from Bacillus subtilis (strain 168).